The sequence spans 122 residues: Large ribosomal subunit protein uL14 (122 aa).

It belongs to the universal ribosomal protein uL14 family. Part of the 50S ribosomal subunit. Forms a cluster with proteins L3 and L19. In the 70S ribosome, L14 and L19 interact and together make contacts with the 16S rRNA in bridges B5 and B8.

Binds to 23S rRNA. Forms part of two intersubunit bridges in the 70S ribosome. The protein is Large ribosomal subunit protein uL14 of Dehalococcoides mccartyi (strain ATCC BAA-2266 / KCTC 15142 / 195) (Dehalococcoides ethenogenes (strain 195)).